The following is a 320-amino-acid chain: Cytochrome f (320 aa).

The first 35 residues, 1-35, serve as a signal peptide directing secretion; it reads MKLNSLINLIQKSIYSCTLLLIILNIICVAPNSSN. Heme is bound by residues Phe37, Cys57, Cys60, and His61. A helical membrane pass occupies residues 286–306; the sequence is IKGMIVFFFASVLAQIFFVLK.

This sequence belongs to the cytochrome f family. The 4 large subunits of the cytochrome b6-f complex are cytochrome b6, subunit IV (17 kDa polypeptide, petD), cytochrome f and the Rieske protein, while the 4 small subunits are PetG, PetL, PetM and PetN. The complex functions as a dimer. The cofactor is heme.

Its subcellular location is the plastid. It localises to the chloroplast thylakoid membrane. In terms of biological role, component of the cytochrome b6-f complex, which mediates electron transfer between photosystem II (PSII) and photosystem I (PSI), cyclic electron flow around PSI, and state transitions. The protein is Cytochrome f of Pyropia yezoensis (Susabi-nori).